The sequence spans 295 residues: uncharacterized protein (295 aa).

Disordered stretches follow at residues 33 to 52 and 180 to 295; these read VDAP…DSHS and LSKA…AELK. Position 50 is a phosphoserine (Ser50). 2 stretches are compositionally biased toward polar residues: residues 205 to 217 and 241 to 251; these read QKNS…SKLI and TSRASVLSQSP. Acidic residues predominate over residues 267 to 276; the sequence is EASEGPEDTP. A compositionally biased stretch (low complexity) spans 277–289; that stretch reads ESSQSPEESVSAS.

This is an uncharacterized protein from Homo sapiens (Human).